A 143-amino-acid chain; its full sequence is Large ribosomal subunit protein uL11 (143 aa).

It belongs to the universal ribosomal protein uL11 family. As to quaternary structure, part of the ribosomal stalk of the 50S ribosomal subunit. Interacts with L10 and the large rRNA to form the base of the stalk. L10 forms an elongated spine to which L12 dimers bind in a sequential fashion forming a multimeric L10(L12)X complex. Post-translationally, one or more lysine residues are methylated.

Forms part of the ribosomal stalk which helps the ribosome interact with GTP-bound translation factors. The protein is Large ribosomal subunit protein uL11 of Delftia acidovorans (strain DSM 14801 / SPH-1).